The chain runs to 418 residues: Serine hydroxymethyltransferase (418 aa).

Residues L121 and G125–L127 each bind (6S)-5,6,7,8-tetrahydrofolate. K230 carries the N6-(pyridoxal phosphate)lysine modification. Residue S356 to F358 coordinates (6S)-5,6,7,8-tetrahydrofolate.

This sequence belongs to the SHMT family. In terms of assembly, homodimer. It depends on pyridoxal 5'-phosphate as a cofactor.

The protein resides in the cytoplasm. It catalyses the reaction (6R)-5,10-methylene-5,6,7,8-tetrahydrofolate + glycine + H2O = (6S)-5,6,7,8-tetrahydrofolate + L-serine. Its pathway is one-carbon metabolism; tetrahydrofolate interconversion. It participates in amino-acid biosynthesis; glycine biosynthesis; glycine from L-serine: step 1/1. Catalyzes the reversible interconversion of serine and glycine with tetrahydrofolate (THF) serving as the one-carbon carrier. This reaction serves as the major source of one-carbon groups required for the biosynthesis of purines, thymidylate, methionine, and other important biomolecules. Also exhibits THF-independent aldolase activity toward beta-hydroxyamino acids, producing glycine and aldehydes, via a retro-aldol mechanism. The sequence is that of Serine hydroxymethyltransferase from Alteromonas mediterranea (strain DSM 17117 / CIP 110805 / LMG 28347 / Deep ecotype).